The following is a 246-amino-acid chain: MGRGKVQLKRIENKINRQVTFSKRRSGLLKKANEISVLCDAEVALIIFSTKGKLYEYATDSCMDKILERYERYSYAEKVLISAESDTQGNWCHEYRKLKAKVETIQKCQKHLMGEDLESLNLKELQQLEQQLENSLKHIRSRKSQLMLESINELQRKEKSLQEENKVLQKELVEKQKVQKQQVQWDQTQPQTSSSSSSFMMREALPTTNISNYPAAAGERIEDVAAGQPQHVRIGLPPWMLSHING.

The MADS-box domain occupies 1-61 (MGRGKVQLKR…GKLYEYATDS (61 aa)). Residues 88 to 178 (QGNWCHEYRK…QKELVEKQKV (91 aa)) enclose the K-box domain. Residues 180–199 (KQQVQWDQTQPQTSSSSSSF) are disordered.

As to quaternary structure, may interact with the K-box of MADS1 and MADS6. In terms of tissue distribution, highly expressed in sterile lemmas, at intermediate levels in stamens, and weakly in lemmas, paleas and carpels.

The protein localises to the nucleus. Probable transcription factor. May be involved in the control of flowering time. The protein is MADS-box transcription factor 14 (MADS14) of Oryza sativa subsp. japonica (Rice).